The sequence spans 279 residues: 2-dehydropantoate 2-reductase (279 aa).

NADP(+) contacts are provided by residues 6 to 11 (GLGAVG), Lys-66, and Asn-86. The Proton donor role is filled by Lys-158. Residues Lys-158, Asn-162, Asn-166, Asn-176, and 225–228 (NLSS) contribute to the substrate site. Glu-240 contributes to the NADP(+) binding site.

The protein belongs to the ketopantoate reductase family.

The protein localises to the cytoplasm. The catalysed reaction is (R)-pantoate + NAD(+) = 2-dehydropantoate + NADH + H(+). The enzyme catalyses (R)-pantoate + NADP(+) = 2-dehydropantoate + NADPH + H(+). It participates in cofactor biosynthesis; coenzyme A biosynthesis. In terms of biological role, catalyzes the NAD(P)H-dependent reduction of ketopantoate into pantoic acid. The sequence is that of 2-dehydropantoate 2-reductase from Pyrobaculum aerophilum (strain ATCC 51768 / DSM 7523 / JCM 9630 / CIP 104966 / NBRC 100827 / IM2).